We begin with the raw amino-acid sequence, 138 residues long: Large ribosomal subunit protein uL16 (138 aa).

It belongs to the universal ribosomal protein uL16 family. As to quaternary structure, part of the 50S ribosomal subunit.

In terms of biological role, binds 23S rRNA and is also seen to make contacts with the A and possibly P site tRNAs. This chain is Large ribosomal subunit protein uL16, found in Nitrosomonas europaea (strain ATCC 19718 / CIP 103999 / KCTC 2705 / NBRC 14298).